A 146-amino-acid polypeptide reads, in one-letter code: Cytochrome c-556 (146 aa).

The N-terminal stretch at 1–24 (MCMKLKTITAAMLFGCLCAGAVYA) is a signal peptide. The heme c site is built by Met-35, Cys-135, Cys-138, and His-139.

In terms of assembly, monomer. Binds 1 heme c group covalently per subunit.

Its function is as follows. Low-spin monoheme cytochrome c. The sequence is that of Cytochrome c-556 from Agrobacterium fabrum (strain C58 / ATCC 33970) (Agrobacterium tumefaciens (strain C58)).